The following is a 171-amino-acid chain: Transcription factor pcr1 (171 aa).

Residues 10–73 form the bZIP domain; it reads DEKRRRILER…FRLKSQLLAH (64 aa). The basic motif stretch occupies residues 12-51; the sequence is KRRRILERNRIAASKFRQKKKEWIKELEQTANAAFEQSKR. The leucine-zipper stretch occupies residues 52-66; the sequence is LQLLLSQLQQEAFRL. Positions 125–171 are disordered; sequence QMHPSLQGLPPNQHPQMPPSSQQPNSDDVQQHMFSAAGLPRSLGGPI. The span at 143–152 shows a compositional bias: low complexity; the sequence is PSSQQPNSDD.

The protein belongs to the bZIP family. Heterodimer of pcr1/mts2 and atf1/mts1.

The protein resides in the nucleus. Its function is as follows. Involved in regulation of gene expression for sexual development. Binds and activates CRE sites (cAMP-response elements, also known as M26 meiotic recombination hotspots). The chain is Transcription factor pcr1 (pcr1) from Schizosaccharomyces pombe (strain 972 / ATCC 24843) (Fission yeast).